Here is a 297-residue protein sequence, read N- to C-terminus: Small ribosomal subunit protein uS2 (297 aa).

Positions 276–297 (DWASSAPAEGWAGEAPATEAKW) are disordered.

It belongs to the universal ribosomal protein uS2 family. Component of the small ribosomal subunit. Mature ribosomes consist of a small (40S) and a large (60S) subunit. The 40S subunit contains about 33 different proteins and 1 molecule of RNA (18S). The 60S subunit contains about 49 different proteins and 3 molecules of RNA (25S, 5.8S and 5S). Interacts with RPS21.

The protein resides in the cytoplasm. In terms of biological role, required for the assembly and/or stability of the 40S ribosomal subunit. Required for the processing of the 20S rRNA-precursor to mature 18S rRNA in a late step of the maturation of 40S ribosomal subunits. The protein is Small ribosomal subunit protein uS2 of Uncinocarpus reesii (strain UAMH 1704).